A 185-amino-acid polypeptide reads, in one-letter code: Small ribosomal subunit protein uS4 (185 aa).

The region spanning 107-179 (RRLQTLVYRK…NGRRKRKNNH (73 aa)) is the S4 RNA-binding domain. Positions 161–185 (NTPLTNPEINGRRKRKNNHAGKEDN) are disordered.

The protein belongs to the universal ribosomal protein uS4 family.

This is Small ribosomal subunit protein uS4 from Entamoeba histolytica (strain ATCC 30459 / HM-1:IMSS / ABRM).